The primary structure comprises 273 residues: S-adenosylmethionine decarboxylase proenzyme (273 aa).

The Schiff-base intermediate with substrate; via pyruvic acid role is filled by S118. S118 is subject to Pyruvic acid (Ser); by autocatalysis. H123 functions as the Proton acceptor; for processing activity in the catalytic mechanism. C146 serves as the catalytic Proton donor; for catalytic activity.

Belongs to the prokaryotic AdoMetDC family. Type 2 subfamily. As to quaternary structure, heterooctamer of four alpha and four beta chains arranged as a tetramer of alpha/beta heterodimers. The cofactor is pyruvate. In terms of processing, is synthesized initially as an inactive proenzyme. Formation of the active enzyme involves a self-maturation process in which the active site pyruvoyl group is generated from an internal serine residue via an autocatalytic post-translational modification. Two non-identical subunits are generated from the proenzyme in this reaction, and the pyruvate is formed at the N-terminus of the alpha chain, which is derived from the carboxyl end of the proenzyme. The post-translation cleavage follows an unusual pathway, termed non-hydrolytic serinolysis, in which the side chain hydroxyl group of the serine supplies its oxygen atom to form the C-terminus of the beta chain, while the remainder of the serine residue undergoes an oxidative deamination to produce ammonia and the pyruvoyl group blocking the N-terminus of the alpha chain.

The enzyme catalyses S-adenosyl-L-methionine + H(+) = S-adenosyl 3-(methylsulfanyl)propylamine + CO2. The protein operates within amine and polyamine biosynthesis; S-adenosylmethioninamine biosynthesis; S-adenosylmethioninamine from S-adenosyl-L-methionine: step 1/1. Its function is as follows. Catalyzes the decarboxylation of S-adenosylmethionine to S-adenosylmethioninamine (dcAdoMet), the propylamine donor required for the synthesis of the polyamines spermine and spermidine from the diamine putrescine. The protein is S-adenosylmethionine decarboxylase proenzyme of Alkalilimnicola ehrlichii (strain ATCC BAA-1101 / DSM 17681 / MLHE-1).